Consider the following 424-residue polypeptide: Folate-like transporter 2 (424 aa).

A glycan (N-linked (GlcNAc...) asparagine) is linked at Asn-35. The next 6 membrane-spanning stretches (helical) occupy residues 48 to 68, 71 to 91, 99 to 119, 136 to 156, 164 to 184, and 233 to 253; these read IWTY…DVFL, PLLV…VFGK, LEVF…YIYV, ALLV…GLNW, IISL…PGVE, and PLIL…YQVT. A glycan (N-linked (GlcNAc...) asparagine) is linked at Asn-254. 4 consecutive transmembrane segments (helical) span residues 299-319, 324-344, 361-381, and 392-412; these read WGDL…FWMS, IVVL…TTTI, LFGI…AVVI, and FVVY…IFGI.

It belongs to the reduced folate carrier (RFC) transporter (TC 2.A.48) family.

It localises to the membrane. In terms of biological role, unlike folt-1, does not appear to act as a folate transporter. The chain is Folate-like transporter 2 (folt-2) from Caenorhabditis elegans.